The sequence spans 116 residues: Ly-6/neurotoxin-like protein 1 (116 aa).

The signal sequence occupies residues 1–20 (MTHLLTVFLVALMGLPVAQA). Residues 21–104 (LECHVCAYNG…GFATPVTLAL (84 aa)) form the UPAR/Ly6 domain. Disulfide bonds link Cys-23–Cys-46, Cys-26–Cys-33, Cys-39–Cys-64, Cys-68–Cys-85, and Cys-86–Cys-91. Asn-92 carries GPI-anchor amidated asparagine lipidation. Residues 93–116 (GAGFATPVTLALVPALLATFWSLL) constitute a propeptide, removed in mature form.

As to quaternary structure, interacts with nAChRs containing alpha-4:beta-2 (CHRNA4:CHRNB2) and alpha-7 (CHRNA7) subunits. Interacts with CHRNA4 probably in the endoplasmic reticulum prior to nAChR pentameric assembly. Interacts with KCNA2/Potassium voltage-gated channel subfamily A member 2. As to expression, expressed in neurons of multiple regions in the CNS, including the cerebral cortex, thalamus, substantia nigra, cerebellum, amygdala and hippocampus. Also expressed in kidney, heart and thymus, but at lower levels than in the brain. Expressed in the primary visual cortex (V1) and the lateral geniculate nucleus (at protein level).

The protein resides in the cell membrane. Its subcellular location is the cell projection. It localises to the dendrite. The protein localises to the endoplasmic reticulum. Functionally, acts in different tissues through interaction to nicotinic acetylcholine receptors (nAChRs). The proposed role as modulator of nAChR activity seems to be dependent on the nAChR subtype and stoichiometry, and to involve an effect on nAChR trafficking and its cell surface expression, and on single channel properties of the nAChR inserted in the plasma membrane. Modulates functional properties of nicotinic acetylcholine receptors (nAChRs) to prevent excessive excitation, and hence neurodegeneration. Enhances desensitization by increasing both the rate and extent of desensitization of alpha-4:beta-2-containing nAChRs and slowing recovery from desensitization. Promotes large amplitude ACh-evoked currents through alpha-4:beta-2 nAChRs. Is involved in regulation of the nAChR pentameric assembly in the endoplasmic reticulum. Shifts stoichiometry from high sensitivity alpha-4(2):beta-2(3) to low sensitivity alpha-4(3):beta-2(2) nAChR. In vitro modulates alpha-3:beta-4-containing nAChRs. Reduces cell surface expression of (alpha-3:beta-4)(2):beta-4 and (alpha-3:beta-4)(2):alpha-5 nAChRs suggesting an interaction with nAChR alpha-3(-):(+)beta-4 subunit interfaces and an allosteric mode. Corresponding single channel effects characterized by decreased unitary conductance, altered burst proportions and enhanced desensitization/inactivation seem to depend on nAChR alpha:alpha subunit interfaces and are greater in (alpha-3:beta-2)(2):alpha-3 when compared to (alpha-3:beta-2)(2):alpha-5 nAChRs. Prevents plasticity in the primary visual cortex late in life. The protein is Ly-6/neurotoxin-like protein 1 of Mus musculus (Mouse).